Consider the following 163-residue polypeptide: Pheromone-binding protein (163 aa).

Positions 1–22 (MMSVRLMLVVAVWLCLRVDASQ) are cleaved as a signal peptide. Cystine bridges form between C39–C74, C70–C129, and C117–C138.

Belongs to the PBP/GOBP family. Antenna.

Its function is as follows. This major soluble protein in olfactory sensilla of male moths might serve to solubilize the extremely hydrophobic pheromone molecules and to transport pheromone through the aqueous lymph to receptors located on olfactory cilia. This is Pheromone-binding protein from Heliothis virescens (Tobacco budworm moth).